The primary structure comprises 116 residues: Iron-sulfur cluster insertion protein ErpA (116 aa).

3 residues coordinate iron-sulfur cluster: Cys44, Cys108, and Cys110.

It belongs to the HesB/IscA family. In terms of assembly, homodimer. Iron-sulfur cluster is required as a cofactor.

Required for insertion of 4Fe-4S clusters for at least IspG. This chain is Iron-sulfur cluster insertion protein ErpA, found in Francisella philomiragia subsp. philomiragia (strain ATCC 25017 / CCUG 19701 / FSC 153 / O#319-036).